The following is a 200-amino-acid chain: Superoxide dismutase [Mn] 2 (200 aa).

Residues His28, His76, Asp158, and His162 each contribute to the Mn(2+) site.

Belongs to the iron/manganese superoxide dismutase family. The cofactor is Mn(2+).

It catalyses the reaction 2 superoxide + 2 H(+) = H2O2 + O2. Its function is as follows. Destroys superoxide anion radicals which are normally produced within the cells and which are toxic to biological systems. The sequence is that of Superoxide dismutase [Mn] 2 (sod2) from Halobacterium salinarum (strain ATCC 700922 / JCM 11081 / NRC-1) (Halobacterium halobium).